Reading from the N-terminus, the 322-residue chain is Aldo-keto reductase family 1 member C23 (322 aa).

20 to 24 (GFGTY) contributes to the NADP(+) binding site. Substrate is bound at residue lysine 31. Aspartate 50 is an NADP(+) binding site. Tyrosine 55 serves as the catalytic Proton donor. Residue histidine 117 participates in substrate binding. NADP(+) is bound by residues 166–167 (SN), glutamine 190, 216–221 (YSALGS), and 269–279 (KSYNEKRIKEN).

Belongs to the aldo/keto reductase family. Monomer. In terms of tissue distribution, detected in follicle granulosa cells (at protein level). Detected in heart, lung, liver, kidney, stomach, uterus, testis, skeletal muscle and granulosa cells of the follicle wall.

It is found in the cytoplasm. NADP-dependent oxidoreductase that has 20-alpha-hydroxysteroid dehydrogenase activity. This Equus caballus (Horse) protein is Aldo-keto reductase family 1 member C23 (AKR1C23).